The chain runs to 186 residues: Ribosome maturation factor RimM (186 aa).

The PRC barrel domain occupies 93 to 168 (EDDFYLVDLI…VLIDPPQEEN (76 aa)). Positions 163-186 (PPQEENAPEFGRNELGHDDGGEAA) are disordered. A compositionally biased stretch (basic and acidic residues) spans 173–186 (GRNELGHDDGGEAA).

It belongs to the RimM family. As to quaternary structure, binds ribosomal protein uS19.

The protein localises to the cytoplasm. In terms of biological role, an accessory protein needed during the final step in the assembly of 30S ribosomal subunit, possibly for assembly of the head region. Essential for efficient processing of 16S rRNA. May be needed both before and after RbfA during the maturation of 16S rRNA. It has affinity for free ribosomal 30S subunits but not for 70S ribosomes. This is Ribosome maturation factor RimM from Granulibacter bethesdensis (strain ATCC BAA-1260 / CGDNIH1).